The chain runs to 172 residues: MFSRATRSLVMKTGGLRTQGTHSPGSAASSSQRRMTPYVDCYAQRSYPMPDEPYCTELSEEQRALKEKEKGSWAQLSQAEKVALYRLQFHETFAEMNHRSNEWKTVMGCVFFFIGFTALVIWWQRVYVFPKKVVTLTEERKAQQLQRLLDMKSNPIQGLSAHWDYEKKEWKK.

Residues 1-18 constitute a mitochondrion transit peptide; it reads MFSRATRSLVMKTGGLRT. Residues 1 to 33 are disordered; the sequence is MFSRATRSLVMKTGGLRTQGTHSPGSAASSSQR. Positions 16-33 are enriched in polar residues; sequence LRTQGTHSPGSAASSSQR. The Mitochondrial matrix portion of the chain corresponds to 19 to 101; that stretch reads QGTHSPGSAA…TFAEMNHRSN (83 aa). The helical transmembrane segment at 102 to 127 threads the bilayer; it reads EWKTVMGCVFFFIGFTALVIWWQRVY. At 128–172 the chain is on the mitochondrial intermembrane side; the sequence is VFPKKVVTLTEERKAQQLQRLLDMKSNPIQGLSAHWDYEKKEWKK.

This sequence belongs to the cytochrome c oxidase IV family. Component of the cytochrome c oxidase (complex IV, CIV), a multisubunit enzyme composed of 14 subunits. The complex is composed of a catalytic core of 3 subunits MT-CO1, MT-CO2 and MT-CO3, encoded in the mitochondrial DNA, and 11 supernumerary subunits COX4I, COX5A, COX5B, COX6A, COX6B, COX6C, COX7A, COX7B, COX7C, COX8 and NDUFA4, which are encoded in the nuclear genome. The complex exists as a monomer or a dimer and forms supercomplexes (SCs) in the inner mitochondrial membrane with NADH-ubiquinone oxidoreductase (complex I, CI) and ubiquinol-cytochrome c oxidoreductase (cytochrome b-c1 complex, complex III, CIII), resulting in different assemblies (supercomplex SCI(1)III(2)IV(1) and megacomplex MCI(2)III(2)IV(2)). As to expression, highly expressed in lung.

The protein localises to the mitochondrion inner membrane. It functions in the pathway energy metabolism; oxidative phosphorylation. In terms of biological role, component of the cytochrome c oxidase, the last enzyme in the mitochondrial electron transport chain which drives oxidative phosphorylation. The respiratory chain contains 3 multisubunit complexes succinate dehydrogenase (complex II, CII), ubiquinol-cytochrome c oxidoreductase (cytochrome b-c1 complex, complex III, CIII) and cytochrome c oxidase (complex IV, CIV), that cooperate to transfer electrons derived from NADH and succinate to molecular oxygen, creating an electrochemical gradient over the inner membrane that drives transmembrane transport and the ATP synthase. Cytochrome c oxidase is the component of the respiratory chain that catalyzes the reduction of oxygen to water. Electrons originating from reduced cytochrome c in the intermembrane space (IMS) are transferred via the dinuclear copper A center (CU(A)) of subunit 2 and heme A of subunit 1 to the active site in subunit 1, a binuclear center (BNC) formed by heme A3 and copper B (CU(B)). The BNC reduces molecular oxygen to 2 water molecules using 4 electrons from cytochrome c in the IMS and 4 protons from the mitochondrial matrix. This is Cytochrome c oxidase subunit 4 isoform 2, mitochondrial (Cox4i2) from Rattus norvegicus (Rat).